The following is a 182-amino-acid chain: Adenylate kinase (182 aa).

Gly-12–Thr-17 contributes to the ATP binding site. An NMP region spans residues Ser-32–Val-61. AMP contacts are provided by residues Thr-33, Arg-38, Glu-59–Val-61, Gly-85–Arg-88, and Gln-92. Residues Ala-126–Asp-132 form an LID region. Arg-127 serves as a coordination point for ATP. AMP is bound by residues Arg-129 and Arg-140. Gly-168 provides a ligand contact to ATP.

This sequence belongs to the adenylate kinase family. Monomer.

The protein resides in the cytoplasm. The catalysed reaction is AMP + ATP = 2 ADP. It functions in the pathway purine metabolism; AMP biosynthesis via salvage pathway; AMP from ADP: step 1/1. In terms of biological role, catalyzes the reversible transfer of the terminal phosphate group between ATP and AMP. Plays an important role in cellular energy homeostasis and in adenine nucleotide metabolism. This chain is Adenylate kinase, found in Synechococcus sp. (strain RCC307).